The following is a 54-amino-acid chain: Hydrophobic protein RCI2B (54 aa).

A run of 2 helical transmembrane segments spans residues 2-22 (STAT…GVFL) and 32-52 (ICLI…LYII).

Belongs to the UPF0057 (PMP3) family.

It localises to the membrane. The polypeptide is Hydrophobic protein RCI2B (RCI2B) (Arabidopsis thaliana (Mouse-ear cress)).